The chain runs to 602 residues: UvrABC system protein C (602 aa).

The GIY-YIG domain maps to 17 to 94 (TTSGCYKMYS…IKEYKPDYNI (78 aa)). One can recognise a UVR domain in the interval 199–234 (SKLLDETEIKMKEAIKKEDFEAAIKLKETKRSLIEI).

This sequence belongs to the UvrC family. Interacts with UvrB in an incision complex.

Its subcellular location is the cytoplasm. Functionally, the UvrABC repair system catalyzes the recognition and processing of DNA lesions. UvrC both incises the 5' and 3' sides of the lesion. The N-terminal half is responsible for the 3' incision and the C-terminal half is responsible for the 5' incision. The protein is UvrABC system protein C of Borrelia hermsii (strain HS1 / DAH).